A 184-amino-acid polypeptide reads, in one-letter code: Casparian strip membrane protein 3 (184 aa).

Over 1–24 the chain is Cytoplasmic; it reads MEGSEEHGETSKAPLSRGVSKGVS. A helical transmembrane segment spans residues 25 to 45; that stretch reads ILDVILRFVAIIGTLASAIAM. The Extracellular portion of the chain corresponds to 46–72; the sequence is GTTNQTLPFFTQFIRFKAQYSDLPTLT. N49 is a glycosylation site (N-linked (GlcNAc...) asparagine). Residues 73–93 form a helical membrane-spanning segment; that stretch reads FFVVANSIVSAYLILSLPLSI. The Cytoplasmic segment spans residues 94–105; the sequence is VHVIRSRAKYSR. Residues 106–126 traverse the membrane as a helical segment; it reads LILIFFDAAMLALVTAGASAA. Topologically, residues 127–159 are extracellular; that stretch reads AAIVYLAHKGNARANWLAICQQFDSFCERISGS. Residues 160-180 form a helical membrane-spanning segment; the sequence is LIGSFAAMVVLVLLIFLSAIA. The Cytoplasmic portion of the chain corresponds to 181-184; sequence LARR.

The protein belongs to the Casparian strip membrane proteins (CASP) family. As to quaternary structure, homodimer and heterodimers.

The protein localises to the cell membrane. Regulates membrane-cell wall junctions and localized cell wall deposition. Required for establishment of the Casparian strip membrane domain (CSD) and the subsequent formation of Casparian strips, a cell wall modification of the root endodermis that determines an apoplastic barrier between the intraorganismal apoplasm and the extraorganismal apoplasm and prevents lateral diffusion. The chain is Casparian strip membrane protein 3 from Oryza sativa subsp. indica (Rice).